Here is a 339-residue protein sequence, read N- to C-terminus: UDP-glucose 4-epimerase (339 aa).

Residues F12–I13, D32–S37, D59–I60, F81–K85, N100, S125, Y150, K154, and F179 contribute to the NAD(+) site. Substrate contacts are provided by S125 and Y150. The active-site Proton acceptor is the Y150. Substrate contacts are provided by residues N180, N200–L201, A217–F219, R232, and R293–D296.

This sequence belongs to the NAD(P)-dependent epimerase/dehydratase family. As to quaternary structure, homodimer. It depends on NAD(+) as a cofactor.

The catalysed reaction is UDP-alpha-D-glucose = UDP-alpha-D-galactose. The protein operates within carbohydrate metabolism; galactose metabolism. Involved in the metabolism of galactose. Plays an essential role in the incorporation of galactose into meningococcal lipopolysaccharide surface molecules, which are important for pathogenesis. Catalyzes the conversion of UDP-galactose (UDP-Gal) to UDP-glucose (UDP-Glc) through a mechanism involving the transient reduction of NAD. This is UDP-glucose 4-epimerase (galE) from Neisseria meningitidis serogroup B (strain ATCC BAA-335 / MC58).